The sequence spans 522 residues: O-fucosyltransferase 38 (522 aa).

Residues 26-46 form a helical; Signal-anchor for type II membrane protein membrane-spanning segment; the sequence is AISLYLIFVFAFTIWVLVFSS. The span at 54 to 67 shows a compositional bias: basic and acidic residues; that stretch reads DHTKHQQQHHRDLI. A disordered region spans residues 54-73; the sequence is DHTKHQQQHHRDLIDSESFP. Asparagine 147 is a glycosylation site (N-linked (GlcNAc...) asparagine). Residue 284-286 participates in substrate binding; it reads HLR. Asparagine 325 carries N-linked (GlcNAc...) asparagine glycosylation. A disordered region spans residues 475–496; it reads HKDRQGAPRRRKGPTQGIKGRA.

This sequence belongs to the glycosyltransferase GT106 family.

It localises to the membrane. It functions in the pathway glycan metabolism. This chain is O-fucosyltransferase 38, found in Arabidopsis thaliana (Mouse-ear cress).